Here is a 447-residue protein sequence, read N- to C-terminus: Asparagine--tRNA ligase (447 aa).

This sequence belongs to the class-II aminoacyl-tRNA synthetase family. As to quaternary structure, homodimer.

The protein resides in the cytoplasm. The enzyme catalyses tRNA(Asn) + L-asparagine + ATP = L-asparaginyl-tRNA(Asn) + AMP + diphosphate + H(+). In Herpetosiphon aurantiacus (strain ATCC 23779 / DSM 785 / 114-95), this protein is Asparagine--tRNA ligase.